Consider the following 134-residue polypeptide: Putative cytochrome c oxidase subunit 6b-like (134 aa).

The interval 1–61 (MSSAQMDPHD…DSGRETDAAV (61 aa)) is disordered. Composition is skewed to basic and acidic residues over residues 7-19 (DPHD…DISK) and 44-61 (ATFR…DAAV). Positions 71 to 114 (TRHCFNRFMQYHKCIEKNGRDANDCNNLRDYVRSICPEELVSKI) constitute a CHCH domain. The Cx9C motif signature appears at 74-84 (CFNRFMQYHKC). 2 disulfides stabilise this stretch: Cys74/Cys106 and Cys84/Cys95. The Cx10C motif motif lies at 95-106 (CNNLRDYVRSIC).

Belongs to the cytochrome c oxidase subunit 6B (TC 3.D.4.8) family.

The protein resides in the mitochondrion. In terms of biological role, this protein is one of the nuclear-coded polypeptide chains of cytochrome c oxidase, the terminal oxidase in mitochondrial electron transport. This protein may be one of the heme-binding subunits of the oxidase. The chain is Putative cytochrome c oxidase subunit 6b-like from Arabidopsis thaliana (Mouse-ear cress).